Here is a 340-residue protein sequence, read N- to C-terminus: tRNA N6-adenosine threonylcarbamoyltransferase (340 aa).

Residues His115 and His119 each coordinate Fe cation. Residues 137-141, Asp170, Gly183, Asp187, and Asn276 each bind substrate; that span reads IVSGG. Residue Asp304 coordinates Fe cation.

Belongs to the KAE1 / TsaD family. Fe(2+) is required as a cofactor.

It is found in the cytoplasm. The catalysed reaction is L-threonylcarbamoyladenylate + adenosine(37) in tRNA = N(6)-L-threonylcarbamoyladenosine(37) in tRNA + AMP + H(+). Required for the formation of a threonylcarbamoyl group on adenosine at position 37 (t(6)A37) in tRNAs that read codons beginning with adenine. Is involved in the transfer of the threonylcarbamoyl moiety of threonylcarbamoyl-AMP (TC-AMP) to the N6 group of A37, together with TsaE and TsaB. TsaD likely plays a direct catalytic role in this reaction. The chain is tRNA N6-adenosine threonylcarbamoyltransferase from Staphylococcus epidermidis (strain ATCC 35984 / DSM 28319 / BCRC 17069 / CCUG 31568 / BM 3577 / RP62A).